Consider the following 268-residue polypeptide: Undecaprenyl-diphosphatase (268 aa).

6 helical membrane-spanning segments follow: residues Ser-39–Lys-59, Leu-75–Val-95, Leu-106–Val-126, Thr-179–Ile-199, Leu-214–Leu-234, and Phe-243–Leu-263.

It belongs to the UppP family.

The protein resides in the cell inner membrane. The enzyme catalyses di-trans,octa-cis-undecaprenyl diphosphate + H2O = di-trans,octa-cis-undecaprenyl phosphate + phosphate + H(+). Catalyzes the dephosphorylation of undecaprenyl diphosphate (UPP). Confers resistance to bacitracin. This is Undecaprenyl-diphosphatase from Methylacidiphilum infernorum (isolate V4) (Methylokorus infernorum (strain V4)).